The primary structure comprises 660 residues: DNA ligase (660 aa).

NAD(+)-binding positions include Asp-33–Asp-37, Ser-82–Leu-83, and Glu-110. The active-site N6-AMP-lysine intermediate is the Lys-112. Arg-133, Glu-167, Lys-281, and Lys-305 together coordinate NAD(+). Zn(2+) contacts are provided by Cys-396, Cys-399, Cys-412, and Cys-417. One can recognise a BRCT domain in the interval Gly-583–Asp-660.

The protein belongs to the NAD-dependent DNA ligase family. LigA subfamily. Mg(2+) serves as cofactor. The cofactor is Mn(2+).

The catalysed reaction is NAD(+) + (deoxyribonucleotide)n-3'-hydroxyl + 5'-phospho-(deoxyribonucleotide)m = (deoxyribonucleotide)n+m + AMP + beta-nicotinamide D-nucleotide.. DNA ligase that catalyzes the formation of phosphodiester linkages between 5'-phosphoryl and 3'-hydroxyl groups in double-stranded DNA using NAD as a coenzyme and as the energy source for the reaction. It is essential for DNA replication and repair of damaged DNA. This Borreliella burgdorferi (strain ATCC 35210 / DSM 4680 / CIP 102532 / B31) (Borrelia burgdorferi) protein is DNA ligase.